Reading from the N-terminus, the 157-residue chain is Capsid protein (157 aa).

Alanine 2 is subject to N-acetylalanine; by host.

Belongs to the virgaviridae capsid protein family.

The protein resides in the virion. Capsid protein self-assembles to form rod-shaped virions about 18 nm in diameter with a central canal enclosing the viral genomic RNA. The polypeptide is Capsid protein (CP) (Capsicum (peppers)).